A 33-amino-acid polypeptide reads, in one-letter code: Beta-amanitin proprotein (33 aa).

Residues 1-10 constitute a propeptide that is removed on maturation; that stretch reads MSDINATRLP. Positions 11–18 form a cross-link, cyclopeptide (Ile-Pro); the sequence is IWGIGCDP. The segment at residues 12–16 is a cross-link (2'-cysteinyl-6'-hydroxytryptophan sulfoxide (Trp-Cys)); sequence WGIGC. Residues 19-33 constitute a propeptide that is removed on maturation; it reads CVGDEVTALLTRGEA.

It belongs to the MSDIN fungal toxin family. In terms of processing, processed by the macrocyclase-peptidase enzyme POPB to yield a toxic cyclic decapeptide. POPB first removes 10 residues from the N-terminus. Conformational trapping of the remaining peptide forces the enzyme to release this intermediate rather than proceed to macrocyclization. The enzyme rebinds the remaining peptide in a different conformation and catalyzes macrocyclization of the N-terminal 8 residues.

In terms of biological role, toxin belonging to the bicyclic octapeptides amatoxins that acts by binding non-competitively to RNA polymerase II and greatly slowing the elongation of transcripts from target promoters. This Amanita fuligineoides protein is Beta-amanitin proprotein.